The chain runs to 397 residues: S-layer protein B (397 aa).

Residues 1-24 (MVVKKTFVLSTLILISVVALVSTA) form the signal peptide. A coiled-coil region spans residues 259–314 (INALNNEVSTLRSEISSLNSTIASLNKSLANANTQISNLQSEITTLNSEIGKLNST). Residues 373–393 (GGIIAGIIGLIVAIVAIVLVM) form a helical membrane-spanning segment.

The protein belongs to the Sulfolobales SlaB family. The mushroom-shaped unit cells of the Sulfolobales' S-layers may consist of three SlaB subunits and six SlaA subunits.

The protein localises to the secreted. It localises to the cell wall. The protein resides in the S-layer. Its subcellular location is the cell membrane. S-layer small protein. May anchor the complex to the cell membrane. The polypeptide is S-layer protein B (Saccharolobus solfataricus (strain ATCC 35092 / DSM 1617 / JCM 11322 / P2) (Sulfolobus solfataricus)).